A 1369-amino-acid polypeptide reads, in one-letter code: Microtubule-associated tumor suppressor candidate 2 (1369 aa).

Disordered stretches follow at residues 180–262 (ASSS…TQTV), 374–442 (GRGN…FIPN), 477–509 (GENK…VAEN), 582–627 (NTSP…EERT), 791–839 (RSSA…LRPP), 861–992 (SSVS…QARE), and 1331–1369 (WKLQ…TTPR). Composition is skewed to polar residues over residues 246–262 (PSTS…TQTV) and 392–401 (LHTTPKQGSA). A mediates interaction with MAPRE1 region spans residues 641-980 (RPKIITYIRR…PKQRTAAARN (340 aa)). Positions 801 to 890 (GPITTATSLY…TRSTFGNEEQ (90 aa)) are sufficient for interaction with KIF2C. A localization to the growing distal tip of microtubules region spans residues 801 to 1150 (GPITTATSLY…HDAALLEMEN (350 aa)). The segment covering 804–814 (TTATSLYSSDP) has biased composition (polar residues). The span at 821–834 (ASSSNAAKSNLPKS) shows a compositional bias: low complexity. A compositionally biased stretch (basic and acidic residues) spans 937-947 (TKKDAQKDQDT). Residues 991–1335 (REAERQLVLR…NEELLWKLQT (345 aa)) are a coiled coil. The segment covering 1348–1369 (SPVYRGSSSGPSSPARVSTTPR) has biased composition (low complexity).

The protein in the C-terminal section; belongs to the MTUS1 family. In terms of assembly, homodimer. Interacts with KIF2C and MAPRE1; the interaction is direct and probably targets MTUS2 and KIF2C to microtubules. Detected in embryonic stem cells differentiating to cardiomyocytes.

The protein localises to the cytoplasm. It is found in the cytoskeleton. Functionally, binds microtubules. Together with MAPRE1 may target the microtubule depolymerase KIF2C to the plus-end of microtubules. May regulate the dynamics of microtubules at their growing distal tip. This is Microtubule-associated tumor suppressor candidate 2 (MTUS2) from Homo sapiens (Human).